The following is a 196-amino-acid chain: Molybdenum cofactor guanylyltransferase (196 aa).

GTP-binding positions include leucine 10–glycine 12, lysine 23, asparagine 51, aspartate 69, and aspartate 99. Aspartate 99 is a Mg(2+) binding site.

Belongs to the MobA family. Monomer. Mg(2+) serves as cofactor.

The protein resides in the cytoplasm. It carries out the reaction Mo-molybdopterin + GTP + H(+) = Mo-molybdopterin guanine dinucleotide + diphosphate. Transfers a GMP moiety from GTP to Mo-molybdopterin (Mo-MPT) cofactor (Moco or molybdenum cofactor) to form Mo-molybdopterin guanine dinucleotide (Mo-MGD) cofactor. This chain is Molybdenum cofactor guanylyltransferase, found in Shewanella sp. (strain W3-18-1).